The sequence spans 62 residues: Small ribosomal subunit protein eS27 (62 aa).

The Zn(2+) site is built by cysteine 17, cysteine 20, cysteine 36, and cysteine 39. Residues 17–39 (CPDCENEQTIFDRACTPVDCIVC) form a C4-type zinc finger.

It belongs to the eukaryotic ribosomal protein eS27 family. As to quaternary structure, part of the 30S ribosomal subunit. Requires Zn(2+) as cofactor.

The polypeptide is Small ribosomal subunit protein eS27 (Methanospirillum hungatei JF-1 (strain ATCC 27890 / DSM 864 / NBRC 100397 / JF-1)).